An 892-amino-acid chain; its full sequence is Ice-binding protein 1 (892 aa).

Residues methionine 1–glycine 23 form the signal peptide. Cysteine 24 carries N-palmitoyl cysteine lipidation. A lipid anchor (S-diacylglycerol cysteine) is attached at cysteine 24. 7 consecutive BIG2 domains span residues threonine 43 to serine 111, threonine 134 to serine 205, serine 221 to aspartate 288, threonine 306 to valine 386, threonine 392 to threonine 471, asparagine 478 to valine 558, and serine 565 to leucine 638. Positions threonine 866–asparagine 869 match the Ice-binding site motif (T-A/G-X-T/N) motif.

Belongs to the ice-binding protein family.

The protein localises to the cell outer membrane. Ice-binding adhesion protein that adsorbs this bacterium onto ice to maintain a favorable position in its aquatic habitat. Inhibits growth of the ice crystals. Has high thermal hysteresis (TH) activity, which is the ability to lower the freezing point of an aqueous solution below its melting point. The TH activity of this protein is approximately 1.4 degrees Celsius at 25 uM and little below 2 degrees Celsius at 80 uM. The protein is Ice-binding protein 1 of Shewanella frigidimarina (strain NCIMB 400).